The sequence spans 90 residues: UPF0367 protein Ava_2513 (90 aa).

The protein belongs to the UPF0367 family.

In Trichormus variabilis (strain ATCC 29413 / PCC 7937) (Anabaena variabilis), this protein is UPF0367 protein Ava_2513.